Consider the following 239-residue polypeptide: Dolichyldiphosphatase (239 aa).

The Lumenal portion of the chain corresponds to 1–34; it reads MNSTAAAINPNPNVIPFDDTYILYDSHDFLSFLS. The helical transmembrane segment at 35–55 threads the bilayer; the sequence is AYFSLMPILVLAFYLSWFIIT. The Cytoplasmic segment spans residues 56–131; it reads RELEACIVAF…KIYTSWKNLN (76 aa). A helical transmembrane segment spans residues 132–152; that stretch reads FLEKCIFSGALALLSFCVCFS. Over 153 to 164 the chain is Lumenal; the sequence is RVYLHYHNLDQV. A helical membrane pass occupies residues 165–185; it reads IVGFSVGALTGSLYFFIVGII. Over 186 to 239 the chain is Cytoplasmic; it reads RELGLINWFLKLRIVRLFYMTDSYNLAPLTLKENYEAYWKRINQRSFNDKSKRD.

The protein belongs to the dolichyldiphosphatase family.

Its subcellular location is the endoplasmic reticulum membrane. The enzyme catalyses a di-trans,poly-cis-dolichyl diphosphate + H2O = a di-trans,poly-cis-dolichyl phosphate + phosphate + H(+). The protein operates within protein modification; protein glycosylation. In terms of biological role, non-essential protein which is required for efficient N-glycosylation. Necessary for maintaining optimal levels of dolichol-linked oligosaccharides. Hydrolyzes dolichyl pyrophosphate at a very high rate and dolichyl monophosphate at a much lower rate. Does not act on phosphatidate. The sequence is that of Dolichyldiphosphatase (CAX4) from Saccharomyces cerevisiae (strain ATCC 204508 / S288c) (Baker's yeast).